We begin with the raw amino-acid sequence, 54 residues long: MKIFFAILLILAVCSMAIWTVNGTPFEVRCATDADCSRKCPGNPPCRNGFCACT.

An N-terminal signal peptide occupies residues 1–23; sequence MKIFFAILLILAVCSMAIWTVNG.

It belongs to the short scorpion toxin superfamily. Potassium channel inhibitor family. Alpha-KTx 14 subfamily. Contains 3 disulfide bridges. As to expression, expressed by the venom gland.

It is found in the secreted. Functionally, potential blocker of potassium channels. The polypeptide is Potassium channel toxin alpha-KTx 14.3 (Olivierus martensii (Manchurian scorpion)).